We begin with the raw amino-acid sequence, 561 residues long: Asparagine synthetase [glutamine-hydrolyzing] (561 aa).

Catalysis depends on cysteine 2, which acts as the For GATase activity. The 190-residue stretch at 2-191 (CGIWALFGSD…PGHYEVLDLK (190 aa)) folds into the Glutamine amidotransferase type-2 domain. Residues 49-53 (RLAVV), 75-77 (NGE), and aspartate 97 contribute to the L-glutamine site. The region spanning 213–536 (HAIYDSVEKL…PGRADWLTHY (324 aa)) is the Asparagine synthetase domain. Residues leucine 256, isoleucine 288, and 363-364 (SG) contribute to the ATP site. Lysine 385 is modified (N6-acetyllysine). Phosphothreonine is present on threonine 545. Residue serine 557 is modified to Phosphoserine.

It carries out the reaction L-aspartate + L-glutamine + ATP + H2O = L-asparagine + L-glutamate + AMP + diphosphate + H(+). Its pathway is amino-acid biosynthesis; L-asparagine biosynthesis; L-asparagine from L-aspartate (L-Gln route): step 1/1. This is Asparagine synthetase [glutamine-hydrolyzing] (Asns) from Mus musculus (Mouse).